A 620-amino-acid polypeptide reads, in one-letter code: Protein NRT1/ PTR FAMILY 2.13 (620 aa).

The interval 1 to 32 (MVLEDRKDGSSLPGRSGSFSKSSPSELDVVDP) is disordered. Positions 10–25 (SSLPGRSGSFSKSSPS) are enriched in low complexity. 12 consecutive transmembrane segments (helical) span residues 70-90 (LGSI…FHLE), 95-115 (ANVI…GAYI), 126-146 (IAFA…TASF), 167-187 (KLQI…SGGI), 213-233 (FFNW…TVVV), 241-261 (WIIG…MFFA), 364-384 (IVPI…QGTF), 402-422 (IPAG…LPFY), 443-463 (LQRI…AGIV), 485-505 (VFWL…NIIG), 524-544 (SLFS…VTVV), and 568-588 (YFYY…WYCA).

The protein belongs to the major facilitator superfamily. Proton-dependent oligopeptide transporter (POT/PTR) (TC 2.A.17) family. Interacts with NLA. Post-translationally, ubiquitinated by NLA. Ubiquitination of NPF2.13 leads to its degradation by the proteasome. Expressed in leaves and flowers. Detected in stems and siliques. Highest expression in the distal lamina of older leaves. Restricted to the sieve element and companion cell complex of the minor vein.

It localises to the cell membrane. In terms of biological role, low-affinity proton-dependent nitrate transporter. Not involved in dipeptides transport, but has a weak glucosinolate transport activity. Involved in phloem loading and nitrate remobilization from the older leaves to other tissues. This chain is Protein NRT1/ PTR FAMILY 2.13 (NPF2.13), found in Arabidopsis thaliana (Mouse-ear cress).